Reading from the N-terminus, the 228-residue chain is Acyl-protein thioesterase 1 (228 aa).

Residues Ser-119, Asp-174, and His-208 each act as charge relay system in the active site.

The protein belongs to the AB hydrolase superfamily. AB hydrolase 2 family.

The protein localises to the cytoplasm. The protein resides in the nucleus. The enzyme catalyses S-hexadecanoyl-L-cysteinyl-[protein] + H2O = L-cysteinyl-[protein] + hexadecanoate + H(+). Its function is as follows. Hydrolyzes fatty acids from S-acylated cysteine residues in proteins with a strong preference for palmitoylated G-alpha proteins over other acyl substrates. Mediates the deacylation of G-alpha proteins such as GPA1 in vivo, but has weak or no activity toward palmitoylated Ras proteins. Has weak lysophospholipase activity in vitro; however such activity may not exist in vivo. The protein is Acyl-protein thioesterase 1 of Kluyveromyces lactis (strain ATCC 8585 / CBS 2359 / DSM 70799 / NBRC 1267 / NRRL Y-1140 / WM37) (Yeast).